Consider the following 230-residue polypeptide: Small ribosomal subunit protein uS3c (230 aa).

One can recognise a KH type-2 domain in the interval 39-109; that stretch reads IRSFIHSKLS…QLRVNVVEIA (71 aa).

This sequence belongs to the universal ribosomal protein uS3 family. In terms of assembly, part of the 30S ribosomal subunit.

It is found in the plastid. It localises to the chloroplast. This chain is Small ribosomal subunit protein uS3c (rps3), found in Pyropia yezoensis (Susabi-nori).